A 95-amino-acid chain; its full sequence is Large ribosomal subunit protein uL23c (95 aa).

This sequence belongs to the universal ribosomal protein uL23 family. Part of the 50S ribosomal subunit.

Its subcellular location is the plastid. The protein localises to the chloroplast. Binds to 23S rRNA. The protein is Large ribosomal subunit protein uL23c (rpl23) of Guillardia theta (Cryptophyte).